We begin with the raw amino-acid sequence, 147 residues long: Protein-export protein SecB (147 aa).

The protein belongs to the SecB family. In terms of assembly, homotetramer, a dimer of dimers. One homotetramer interacts with 1 SecA dimer.

It localises to the cytoplasm. Functionally, one of the proteins required for the normal export of preproteins out of the cell cytoplasm. It is a molecular chaperone that binds to a subset of precursor proteins, maintaining them in a translocation-competent state. It also specifically binds to its receptor SecA. The polypeptide is Protein-export protein SecB (Neisseria meningitidis serogroup A / serotype 4A (strain DSM 15465 / Z2491)).